The chain runs to 497 residues: NAD(P)H-quinone oxidoreductase subunit 2, chloroplastic (497 aa).

14 helical membrane-spanning segments follow: residues 13–33, 37–57, 76–96, 103–123, 129–149, 164–184, 206–226, 240–260, 274–294, 311–331, 332–352, 373–393, 406–426, and 462–482; these read VILP…LDLI, SAWL…ALVF, FTIS…LIST, GMGL…GLFL, LVTV…LVGY, LLMG…LYGL, IAVW…LSAF, PTPV…ALAT, WHVL…LIAA, AGYL…GMIT, YMVT…LFGL, AFCL…AGFF, GLYL…YYYL, and VGIA…NPII.

The protein belongs to the complex I subunit 2 family. NDH is composed of at least 16 different subunits, 5 of which are encoded in the nucleus.

The protein localises to the plastid. Its subcellular location is the chloroplast thylakoid membrane. It catalyses the reaction a plastoquinone + NADH + (n+1) H(+)(in) = a plastoquinol + NAD(+) + n H(+)(out). The catalysed reaction is a plastoquinone + NADPH + (n+1) H(+)(in) = a plastoquinol + NADP(+) + n H(+)(out). NDH shuttles electrons from NAD(P)H:plastoquinone, via FMN and iron-sulfur (Fe-S) centers, to quinones in the photosynthetic chain and possibly in a chloroplast respiratory chain. The immediate electron acceptor for the enzyme in this species is believed to be plastoquinone. Couples the redox reaction to proton translocation, and thus conserves the redox energy in a proton gradient. The polypeptide is NAD(P)H-quinone oxidoreductase subunit 2, chloroplastic (Zygnema circumcarinatum (Green alga)).